The following is a 448-amino-acid chain: 5-hydroxytryptamine receptor 7 (448 aa).

The Extracellular segment spans residues 1-86 (MMDVNSSGRP…INYGRVEKVV (86 aa)). Asn5 and Asn69 each carry an N-linked (GlcNAc...) asparagine glycan. A helical membrane pass occupies residues 87-111 (IGSILTLITLLTIAGNCLVVISVCF). Residues 112 to 121 (VKKLRQPSNY) lie on the Cytoplasmic side of the membrane. Residues 122-143 (LIVSLALADLSVAVAVMPFVSV) traverse the membrane as a helical segment. Over 144-155 (TDLIGGKWIFGH) the chain is Extracellular. A helical transmembrane segment spans residues 156 to 181 (FFCNVFIAMDVMCCTASIMTLCVISI). An intrachain disulfide couples Cys158 to Cys234. Residue Asp165 coordinates serotonin. The Cytoplasmic portion of the chain corresponds to 182 to 201 (DRYLGITRPLTYPVRQNGKC). The helical transmembrane segment at 202–222 (MAKMILSVWLLSASITLPPLF) threads the bilayer. The Extracellular portion of the chain corresponds to 223-240 (GWAQNVNDDKVCLISQDF). A helical transmembrane segment spans residues 241–263 (GYTIYSTAVAFYIPMSVMLFMYY). Over 264–329 (QIYKAARKSA…SIFKREQKAA (66 aa)) the chain is Cytoplasmic. The helical transmembrane segment at 330-355 (TTLGIIVGAFTVCWLPFFLLSTARPF) threads the bilayer. At 356-366 (ICGTSCSCIPL) the chain is on the extracellular side. A helical transmembrane segment spans residues 367–390 (WVERTCLWLGYANSLINPFIYAFF). Residues 391 to 448 (NRDLRTTYRSLLQCQYRNINRKLSAAGMHEALKLAERPERSEFVLQNSDHCGKKGHDT) are Cytoplasmic-facing. Residue Cys404 is the site of S-palmitoyl cysteine attachment.

It belongs to the G-protein coupled receptor 1 family. Thalamus, hypothalamus, and the hippocampal rudiments.

It is found in the cell membrane. G-protein coupled receptor for 5-hydroxytryptamine (serotonin), a biogenic hormone that functions as a neurotransmitter, a hormone and a mitogen. Ligand binding causes a conformation change that triggers signaling via guanine nucleotide-binding proteins (G proteins) and modulates the activity of downstream effectors. HTR7 is coupled to G(s) G alpha proteins and mediates activation of adenylate cyclase activity. In Rattus norvegicus (Rat), this protein is 5-hydroxytryptamine receptor 7.